Reading from the N-terminus, the 209-residue chain is Large ribosomal subunit protein uL3 (209 aa).

The segment at 128 to 163 is disordered; that stretch reads FGGGSRTHGQSDRLRAPGSVGGSSDPSRTFRGTRMA.

The protein belongs to the universal ribosomal protein uL3 family. In terms of assembly, part of the 50S ribosomal subunit. Forms a cluster with proteins L14 and L19.

In terms of biological role, one of the primary rRNA binding proteins, it binds directly near the 3'-end of the 23S rRNA, where it nucleates assembly of the 50S subunit. This Chlorobium phaeobacteroides (strain DSM 266 / SMG 266 / 2430) protein is Large ribosomal subunit protein uL3.